A 306-amino-acid polypeptide reads, in one-letter code: Protein-methionine-sulfoxide reductase catalytic subunit MsrP (306 aa).

Positions 1–45 (MLIRHAPDLTDNDVTDHSLYLKRRTLMAGVAGLGVAGASASHAQA) form a signal peptide, tat-type signal. Mo-molybdopterin is bound by residues N69, 72–73 (YE), C127, T162, N210, R215, and 226–228 (GIK).

It belongs to the MsrP family. As to quaternary structure, heterodimer of a catalytic subunit (MsrP) and a heme-binding subunit (MsrQ). Mo-molybdopterin serves as cofactor. Post-translationally, predicted to be exported by the Tat system. The position of the signal peptide cleavage has not been experimentally proven.

It localises to the periplasm. The catalysed reaction is L-methionyl-[protein] + a quinone + H2O = L-methionyl-(S)-S-oxide-[protein] + a quinol. The enzyme catalyses L-methionyl-[protein] + a quinone + H2O = L-methionyl-(R)-S-oxide-[protein] + a quinol. Functionally, part of the MsrPQ system that repairs oxidized periplasmic proteins containing methionine sulfoxide residues (Met-O), using respiratory chain electrons. Thus protects these proteins from oxidative-stress damage caused by reactive species of oxygen and chlorine generated by the host defense mechanisms. MsrPQ is essential for the maintenance of envelope integrity under bleach stress, rescuing a wide series of structurally unrelated periplasmic proteins from methionine oxidation. The catalytic subunit MsrP is non-stereospecific, being able to reduce both (R-) and (S-) diastereoisomers of methionine sulfoxide. The sequence is that of Protein-methionine-sulfoxide reductase catalytic subunit MsrP from Caulobacter vibrioides (strain ATCC 19089 / CIP 103742 / CB 15) (Caulobacter crescentus).